Here is a 108-residue protein sequence, read N- to C-terminus: UPF0060 membrane protein YnfA (108 aa).

Residues 1-5 are Periplasmic-facing; sequence MIKTT. The chain crosses the membrane as a helical span at residues 6–26; the sequence is LLFFATALCEIIGCFLPWLWL. Over 27-30 the chain is Cytoplasmic; the sequence is KRNA. Residues 31–51 form a helical membrane-spanning segment; that stretch reads SIWLLLPAGISLALFVWLLTL. The Periplasmic segment spans residues 52–60; sequence HPAASGRVY. Residues 61–81 form a helical membrane-spanning segment; the sequence is AAYGGVYVCTALMWLRVVDGV. Topologically, residues 82-84 are cytoplasmic; it reads KLT. Residues 85–105 traverse the membrane as a helical segment; the sequence is LYDWTGALIALCGMLIIVAGW. Residues 106–108 lie on the Periplasmic side of the membrane; that stretch reads GRT.

Belongs to the UPF0060 family.

The protein localises to the cell inner membrane. The polypeptide is UPF0060 membrane protein YnfA (Escherichia coli O139:H28 (strain E24377A / ETEC)).